A 183-amino-acid chain; its full sequence is Ankyrin repeat domain-containing protein 39 (183 aa).

ANK repeat units follow at residues 30 to 59 (DFER…DPSQ), 63 to 92 (AGYT…KCDA), 96 to 125 (GGAT…NPRL), and 129 to 158 (DGMT…ALKA). Residue Ser-153 is modified to Phosphoserine.

This sequence belongs to the ANKRD39 family.

This chain is Ankyrin repeat domain-containing protein 39 (ANKRD39), found in Bos taurus (Bovine).